Here is a 454-residue protein sequence, read N- to C-terminus: Trichosetin biosynthesis cluster transcription factor TF22 (454 aa).

A DNA-binding region (zn(2)-C6 fungal-type) is located at residues Cys13–Cys47. Residues Pro51–Gly89 form a disordered region. The segment covering Arg52–Gly61 has biased composition (polar residues). Basic and acidic residues predominate over residues Asn63–Pro74.

Its subcellular location is the nucleus. Its function is as follows. Transcription factor that regulates the expression of the gene cluster that mediates the biosynthesis of trichosetin, a trans-fused decalin-containing tetramic acid with antimicrobial activity. Directly activates expression of only the three biosynthetic genes PKS-NRPS1, DA and ER, while TF23 and MFS-T are induced by the final product trichosetin and not by TF22. This Gibberella fujikuroi (strain CBS 195.34 / IMI 58289 / NRRL A-6831) (Bakanae and foot rot disease fungus) protein is Trichosetin biosynthesis cluster transcription factor TF22.